We begin with the raw amino-acid sequence, 136 residues long: Large ribosomal subunit protein uL16 (136 aa).

The protein belongs to the universal ribosomal protein uL16 family. As to quaternary structure, part of the 50S ribosomal subunit.

Its function is as follows. Binds 23S rRNA and is also seen to make contacts with the A and possibly P site tRNAs. The polypeptide is Large ribosomal subunit protein uL16 (Rickettsia rickettsii (strain Iowa)).